Consider the following 353-residue polypeptide: Tetraacyldisaccharide 4'-kinase (353 aa).

66-73 (TVGGTGKT) lines the ATP pocket.

Belongs to the LpxK family.

It carries out the reaction a lipid A disaccharide + ATP = a lipid IVA + ADP + H(+). It functions in the pathway glycolipid biosynthesis; lipid IV(A) biosynthesis; lipid IV(A) from (3R)-3-hydroxytetradecanoyl-[acyl-carrier-protein] and UDP-N-acetyl-alpha-D-glucosamine: step 6/6. Functionally, transfers the gamma-phosphate of ATP to the 4'-position of a tetraacyldisaccharide 1-phosphate intermediate (termed DS-1-P) to form tetraacyldisaccharide 1,4'-bis-phosphate (lipid IVA). The protein is Tetraacyldisaccharide 4'-kinase of Geobacter sulfurreducens (strain ATCC 51573 / DSM 12127 / PCA).